A 58-amino-acid chain; its full sequence is Large ribosomal subunit protein uL30 (58 aa).

Belongs to the universal ribosomal protein uL30 family. As to quaternary structure, part of the 50S ribosomal subunit.

This Azotobacter vinelandii (strain DJ / ATCC BAA-1303) protein is Large ribosomal subunit protein uL30.